The primary structure comprises 304 residues: UDP-3-O-acyl-N-acetylglucosamine deacetylase (304 aa).

The Zn(2+) site is built by histidine 78, histidine 237, and aspartate 241. Histidine 264 (proton donor) is an active-site residue.

The protein belongs to the LpxC family. Zn(2+) serves as cofactor.

It carries out the reaction a UDP-3-O-[(3R)-3-hydroxyacyl]-N-acetyl-alpha-D-glucosamine + H2O = a UDP-3-O-[(3R)-3-hydroxyacyl]-alpha-D-glucosamine + acetate. Its pathway is glycolipid biosynthesis; lipid IV(A) biosynthesis; lipid IV(A) from (3R)-3-hydroxytetradecanoyl-[acyl-carrier-protein] and UDP-N-acetyl-alpha-D-glucosamine: step 2/6. Its function is as follows. Catalyzes the hydrolysis of UDP-3-O-myristoyl-N-acetylglucosamine to form UDP-3-O-myristoylglucosamine and acetate, the committed step in lipid A biosynthesis. The polypeptide is UDP-3-O-acyl-N-acetylglucosamine deacetylase (Acidithiobacillus ferrooxidans (strain ATCC 53993 / BNL-5-31) (Leptospirillum ferrooxidans (ATCC 53993))).